A 194-amino-acid polypeptide reads, in one-letter code: Small ribosomal subunit protein uS4c (194 aa).

Residues 1–29 (RFKKIRRLGTLPGLTSKRPRSGSDLKNPL) form a disordered region. Residues 82-143 (MRLDNILFRL…KQRSKALIQN (62 aa)) form the S4 RNA-binding domain.

Belongs to the universal ribosomal protein uS4 family. As to quaternary structure, part of the 30S ribosomal subunit. Contacts protein S5. The interaction surface between S4 and S5 is involved in control of translational fidelity.

It localises to the plastid. The protein localises to the chloroplast. In terms of biological role, one of the primary rRNA binding proteins, it binds directly to 16S rRNA where it nucleates assembly of the body of the 30S subunit. Its function is as follows. With S5 and S12 plays an important role in translational accuracy. The polypeptide is Small ribosomal subunit protein uS4c (rps4) (Furcraea foetida (Mauritius hemp)).